Reading from the N-terminus, the 61-residue chain is uncharacterized protein (61 aa).

Residues 10–27 (RILFFFFIFFTLFLFNIP) traverse the membrane as a helical segment.

It localises to the membrane. This is an uncharacterized protein from Dictyostelium discoideum (Social amoeba).